A 185-amino-acid polypeptide reads, in one-letter code: Photosystem I assembly protein Ycf4 (185 aa).

Helical transmembrane passes span 24-44 (YIIG…SISS) and 66-86 (IIMG…WYMV).

The protein belongs to the Ycf4 family.

It localises to the cellular thylakoid membrane. Its function is as follows. Seems to be required for the assembly of the photosystem I complex. The protein is Photosystem I assembly protein Ycf4 of Prochlorococcus marinus (strain MIT 9312).